The chain runs to 231 residues: 7-cyano-7-deazaguanine synthase (231 aa).

8 to 18 (FSGGQDSTTCL) provides a ligand contact to ATP. Positions 188, 197, 200, and 203 each coordinate Zn(2+).

This sequence belongs to the QueC family. Zn(2+) serves as cofactor.

It catalyses the reaction 7-carboxy-7-deazaguanine + NH4(+) + ATP = 7-cyano-7-deazaguanine + ADP + phosphate + H2O + H(+). The protein operates within purine metabolism; 7-cyano-7-deazaguanine biosynthesis. Its function is as follows. Catalyzes the ATP-dependent conversion of 7-carboxy-7-deazaguanine (CDG) to 7-cyano-7-deazaguanine (preQ(0)). This is 7-cyano-7-deazaguanine synthase from Escherichia coli (strain ATCC 8739 / DSM 1576 / NBRC 3972 / NCIMB 8545 / WDCM 00012 / Crooks).